We begin with the raw amino-acid sequence, 396 residues long: Probable sugar efflux transporter (396 aa).

The Cytoplasmic segment spans residues 1–14 (MTINPVSRKVAWLR). A helical transmembrane segment spans residues 15–35 (VVTLAIAAFIFNTTEFVPVGL). Residues 36–49 (LSDIAESFHMQTAQ) are Periplasmic-facing. The helical transmembrane segment at 50–70 (VGIMLTIYAWVVAVMSLPFML) threads the bilayer. The Cytoplasmic segment spans residues 71 to 80 (LTSQMERRKL). The helical transmembrane segment at 81–101 (LIYLFVLFIASHVLSFLAWNF) threads the bilayer. Position 102 (Thr-102) is a topological domain, periplasmic. Residues 103–123 (VLVISRIGIAFAHAIFWSITA) form a helical membrane-spanning segment. Residues 124–135 (SLAIRLAPAGKR) are Cytoplasmic-facing. A helical transmembrane segment spans residues 136-156 (AQALSLIATGTALAMVLGLPI). The Periplasmic segment spans residues 157–168 (GRVVGQYFGWRT). The helical transmembrane segment at 169 to 189 (TFFAIGMGALITLLCLIKLLP) threads the bilayer. Topologically, residues 190–208 (KLPSEHSGSLKSLPLLFRR) are cytoplasmic. Residues 209–229 (PALMSLYVLTVVVVTAHYTAY) traverse the membrane as a helical segment. Over 230–245 (SYIEPFVQNVAGLSAN) the chain is Periplasmic. A helical membrane pass occupies residues 246-266 (FATVLLLILGGAGIIGSLVFG). Topologically, residues 267 to 274 (KLGNRHAS) are cytoplasmic. Residues 275-295 (SLVSIAIALLVVCLLLLLPAA) form a helical membrane-spanning segment. The Periplasmic portion of the chain corresponds to 296–300 (ESEAH). A helical transmembrane segment spans residues 301–321 (LAILSIFWGIAIMVIGLGMQV). Over 322-332 (KVLALAPDATD) the chain is Cytoplasmic. A helical transmembrane segment spans residues 333 to 353 (VAMALFSGIFNIGIGAGALVG). The Periplasmic portion of the chain corresponds to 354 to 363 (NQVSLHWSMS). A helical transmembrane segment spans residues 364-384 (AIGYIGAIPACAALVWAVLIF). Over 385–396 (RKWPVTLEEQPH) the chain is Cytoplasmic.

It belongs to the major facilitator superfamily. SotB (TC 2.A.1.2) family.

It is found in the cell inner membrane. Its function is as follows. Involved in the efflux of sugars. The physiological role may be the reduction of the intracellular concentration of toxic sugars or sugar metabolites. In Salmonella typhimurium (strain LT2 / SGSC1412 / ATCC 700720), this protein is Probable sugar efflux transporter.